A 39-amino-acid chain; its full sequence is Osmotin-like protein (39 aa).

It belongs to the thaumatin family. Post-translationally, contains intrachain disulfide bonds.

Functionally, may be an important antifungal protein. This Hevea brasiliensis (Para rubber tree) protein is Osmotin-like protein.